Reading from the N-terminus, the 308-residue chain is Uridylate cyclase (308 aa).

The Mn(2+) site is built by D62 and D106.

This sequence belongs to the adenylyl cyclase class-4/guanylyl cyclase family. Pyrimidine cyclase subfamily. As to quaternary structure, homodimer. Mn(2+) serves as cofactor.

It localises to the cytoplasm. The catalysed reaction is GTP = 3',5'-cyclic GMP + diphosphate. The enzyme catalyses UTP = 3',5'-cyclic UMP + diphosphate. Pycsar (pyrimidine cyclase system for antiphage resistance) provides immunity against bacteriophage. The pyrimidine cyclase (PycC) synthesizes cyclic nucleotides in response to infection; these serve as specific second messenger signals. The signals activate the adjacent effector, leading to bacterial cell death and abortive phage infection. A clade D Pycsar system. Its function is as follows. The pyrimidine cyclase gene of a two-gene Pycsar system, generates cyclic UMP (cUMP) from UTP as well as cGMP from GTP to a lesser extent, has little to no activity on ATP or CTP. Expression of this and adjacent effector PtPycTM (AC A0A4Q9KQH5) probably confers resistance to bacteriophage. The genes are probably only expressed in response to bacteriophage infection. The chain is Uridylate cyclase from Propioniciclava tarda.